The following is a 382-amino-acid chain: LIM homeobox transcription factor 1-alpha (382 aa).

LIM zinc-binding domains are found at residues S33 to V92 and V92 to L154. Disordered stretches follow at residues A161 to R208 and K252 to I286. The homeobox DNA-binding region spans P195–A254. A compositionally biased stretch (low complexity) spans R256–R269.

It is found in the nucleus. Functionally, acts as a transcriptional activator by binding to an A/T-rich sequence, the FLAT element, in the insulin gene promoter. Required for development of the roof plate and, in turn, for specification of dorsal cell fates in the CNS and developing vertebrae. This chain is LIM homeobox transcription factor 1-alpha (Lmx1a), found in Mus musculus (Mouse).